We begin with the raw amino-acid sequence, 318 residues long: NADH-ubiquinone oxidoreductase chain 1 (318 aa).

A run of 8 helical transmembrane segments spans residues 2–22, 70–90, 100–120, 136–156, 172–192, 222–242, 253–273, and 294–314; these read FMINILTLILPILLAVAFLTL, MFIIAPVLALTLALTMWSPLP, LGVLFMLAMSSLAVYSILWSG, VAQTISYEVTLAIILLSVLLM, LWLLFPSWPLAMMWFISTLAE, LFFLAEYANIIMMNMLTAILF, ELYTANLIIKTLLLTMSFLWI, and LPLTLALCMWHISLPIMTASI.

It belongs to the complex I subunit 1 family. As to quaternary structure, core subunit of respiratory chain NADH dehydrogenase (Complex I) which is composed of 45 different subunits.

It is found in the mitochondrion inner membrane. It carries out the reaction a ubiquinone + NADH + 5 H(+)(in) = a ubiquinol + NAD(+) + 4 H(+)(out). In terms of biological role, core subunit of the mitochondrial membrane respiratory chain NADH dehydrogenase (Complex I) which catalyzes electron transfer from NADH through the respiratory chain, using ubiquinone as an electron acceptor. Essential for the catalytic activity and assembly of complex I. The sequence is that of NADH-ubiquinone oxidoreductase chain 1 (MT-ND1) from Balaenoptera physalus (Fin whale).